Here is a 508-residue protein sequence, read N- to C-terminus: Photosystem II CP47 reaction center protein (508 aa).

6 helical membrane passes run 21–36 (SVHI…WAGS), 101–115 (IVFS…IWHW), 140–156 (GIHL…FGAF), 203–218 (IAAG…FHLS), 237–252 (VLSS…AFVV), and 457–472 (SFAL…HGAR).

Belongs to the PsbB/PsbC family. PsbB subfamily. PSII is composed of 1 copy each of membrane proteins PsbA, PsbB, PsbC, PsbD, PsbE, PsbF, PsbH, PsbI, PsbJ, PsbK, PsbL, PsbM, PsbT, PsbX, PsbY, PsbZ, Psb30/Ycf12, at least 3 peripheral proteins of the oxygen-evolving complex and a large number of cofactors. It forms dimeric complexes. It depends on Binds multiple chlorophylls. PSII binds additional chlorophylls, carotenoids and specific lipids. as a cofactor.

The protein resides in the plastid. Its subcellular location is the chloroplast thylakoid membrane. Its function is as follows. One of the components of the core complex of photosystem II (PSII). It binds chlorophyll and helps catalyze the primary light-induced photochemical processes of PSII. PSII is a light-driven water:plastoquinone oxidoreductase, using light energy to abstract electrons from H(2)O, generating O(2) and a proton gradient subsequently used for ATP formation. This is Photosystem II CP47 reaction center protein from Atropa belladonna (Belladonna).